Reading from the N-terminus, the 435-residue chain is ATP-dependent RNA helicase DBP8 (435 aa).

The Q motif signature appears at 4 to 32; that stretch reads SEFKSLGCSKWLVEALNAMKIVQPTAIQK. The 177-residue stretch at 35-211 folds into the Helicase ATP-binding domain; sequence IPEILKGRDC…DAPQTEGKPP (177 aa). 48–55 is an ATP binding site; the sequence is ANTGSGKT. The DEAD box motif lies at 157 to 160; it reads DEAD. The region spanning 244–391 is the Helicase C-terminal domain; sequence YLYQILTSEK…FTDVGDTAVI (148 aa). The segment covering 409 to 429 has biased composition (basic and acidic residues); that stretch reads MDKEGFGERRKLQKRKNESKE. Positions 409-435 are disordered; it reads MDKEGFGERRKLQKRKNESKEKTHRRT.

It belongs to the DEAD box helicase family. DDX49/DBP8 subfamily.

It localises to the nucleus. Its subcellular location is the nucleolus. The catalysed reaction is ATP + H2O = ADP + phosphate + H(+). In terms of biological role, ATP-binding RNA helicase involved in 40S ribosomal subunit biogenesis and is required for the normal formation of 18S rRNAs through pre-rRNA processing at A0, A1 and A2 sites. Required for vegetative growth. The sequence is that of ATP-dependent RNA helicase DBP8 (DBP8) from Kluyveromyces lactis (strain ATCC 8585 / CBS 2359 / DSM 70799 / NBRC 1267 / NRRL Y-1140 / WM37) (Yeast).